The sequence spans 309 residues: Homoserine kinase (309 aa).

Residue 95 to 105 (PHGRGLGSSSA) participates in ATP binding.

The protein belongs to the GHMP kinase family. Homoserine kinase subfamily.

It is found in the cytoplasm. It carries out the reaction L-homoserine + ATP = O-phospho-L-homoserine + ADP + H(+). It functions in the pathway amino-acid biosynthesis; L-threonine biosynthesis; L-threonine from L-aspartate: step 4/5. Catalyzes the ATP-dependent phosphorylation of L-homoserine to L-homoserine phosphate. This chain is Homoserine kinase, found in Streptomyces coelicolor (strain ATCC BAA-471 / A3(2) / M145).